Reading from the N-terminus, the 250-residue chain is Diphthine synthase (250 aa).

Residues leucine 9, aspartate 85, valine 88, 113 to 114, leucine 165, alanine 202, and histidine 227 each bind S-adenosyl-L-methionine; that span reads SI.

It belongs to the diphthine synthase family. In terms of assembly, homodimer.

It catalyses the reaction 2-[(3S)-amino-3-carboxypropyl]-L-histidyl-[translation elongation factor 2] + 3 S-adenosyl-L-methionine = diphthine-[translation elongation factor 2] + 3 S-adenosyl-L-homocysteine + 3 H(+). The protein operates within protein modification; peptidyl-diphthamide biosynthesis. In terms of biological role, S-adenosyl-L-methionine-dependent methyltransferase that catalyzes the trimethylation of the amino group of the modified target histidine residue in translation elongation factor 2 (EF-2), to form an intermediate called diphthine. The three successive methylation reactions represent the second step of diphthamide biosynthesis. This Methanoregula boonei (strain DSM 21154 / JCM 14090 / 6A8) protein is Diphthine synthase.